We begin with the raw amino-acid sequence, 443 residues long: Cyclin-A2-1 (443 aa).

Positions 1 to 10 (MHRASSKHTN) are enriched in basic residues. The disordered stretch occupies residues 1-61 (MHRASSKHTN…KRVARPSNKR (61 aa)). Basic and acidic residues predominate over residues 11–25 (AKKEAISTSKIRDNN).

Belongs to the cyclin family. Cyclin AB subfamily. As to expression, expressed in tissues with active cell division: apical root and shoot meristems, lateral root and leaf primordia, floral meristems and developing pollen.

May negatively regulate endocycles and act as a regulator of ploidy levels in endoreduplication. This chain is Cyclin-A2-1 (CYCA2-1), found in Arabidopsis thaliana (Mouse-ear cress).